Here is a 245-residue protein sequence, read N- to C-terminus: MLIIPAIDLKDGACVRLRQGRMEDSTVFSDDPVSMAAKWVEGGCRRLHLVDLNGAFEGQPVNGEVVTAIAKRYPNLPIQIGGGIRSLETIEHYVKAGVSYVIIGTKAVKQPEFVAEACKAFPGKVIVGLDAKDGFVATDGWAEVSSVQVIDLAKRFEADGVSAIVYTDIAKDGMMQGCNVPFTAALAAATSIPVIASGGIHNLGDIKTLLDAKAPGIVGAITGRAIYEGTLDVAEAQAFCDNYKG.

Asp8 (proton acceptor) is an active-site residue. Catalysis depends on Asp130, which acts as the Proton donor.

Belongs to the HisA/HisF family.

Its subcellular location is the cytoplasm. It catalyses the reaction 1-(5-phospho-beta-D-ribosyl)-5-[(5-phospho-beta-D-ribosylamino)methylideneamino]imidazole-4-carboxamide = 5-[(5-phospho-1-deoxy-D-ribulos-1-ylimino)methylamino]-1-(5-phospho-beta-D-ribosyl)imidazole-4-carboxamide. The protein operates within amino-acid biosynthesis; L-histidine biosynthesis; L-histidine from 5-phospho-alpha-D-ribose 1-diphosphate: step 4/9. In Pseudomonas putida (strain W619), this protein is 1-(5-phosphoribosyl)-5-[(5-phosphoribosylamino)methylideneamino] imidazole-4-carboxamide isomerase.